Here is a 338-residue protein sequence, read N- to C-terminus: High mobility group B protein 9 (338 aa).

In terms of domain architecture, ARID spans 38 to 129 (VKDSSVFWDT…LLFHYEQVHL (92 aa)). The segment at 233–259 (TGRRRRRLGKRRRSRRREDPNYPKPNR) is disordered. Residues 235-247 (RRRRRLGKRRRSR) are compositionally biased toward basic residues. A DNA-binding region (HMG box) is located at residues 255-322 (PKPNRSGYNF…RYQRELNEYR (68 aa)).

Predominantly expressed in leaves, flowers and seedlings.

It localises to the nucleus. Functionally, binds preferentially DNA with A/T-rich content. Required for karyogamy during female gametophyte development, when the two polar nuclei fuse to form the diploid central cell nucleus. This chain is High mobility group B protein 9 (HMGB9), found in Arabidopsis thaliana (Mouse-ear cress).